The sequence spans 493 residues: Glutamyl-tRNA(Gln) amidotransferase subunit A (493 aa).

Catalysis depends on charge relay system residues Lys79 and Ser159. The active-site Acyl-ester intermediate is the Ser183.

It belongs to the amidase family. GatA subfamily. As to quaternary structure, heterotrimer of A, B and C subunits.

It catalyses the reaction L-glutamyl-tRNA(Gln) + L-glutamine + ATP + H2O = L-glutaminyl-tRNA(Gln) + L-glutamate + ADP + phosphate + H(+). Allows the formation of correctly charged Gln-tRNA(Gln) through the transamidation of misacylated Glu-tRNA(Gln) in organisms which lack glutaminyl-tRNA synthetase. The reaction takes place in the presence of glutamine and ATP through an activated gamma-phospho-Glu-tRNA(Gln). This is Glutamyl-tRNA(Gln) amidotransferase subunit A from Brucella melitensis biotype 2 (strain ATCC 23457).